The following is a 195-amino-acid chain: MATITNADPYKILFEQDIKTATNIPMVTFISNVEEFVKDKDVENVFKQLQEAYQKYKFFESKLSNNISMLTQRSKQLQESLDIVDHVENKSNESFSVQYELSEGVYSSAQVNEPKSIYLWLGANVMLEYSFEEAREVLRKNKDTVDRQLSESIQDLGFVKDQITTTDVNVSRVYNYDIIQKRKLKLSGKTEEEEK.

This sequence belongs to the prefoldin subunit alpha family. As to quaternary structure, heterohexamer of two PFD-alpha type and four PFD-beta type subunits.

Its function is as follows. Binds specifically to cytosolic chaperonin (c-CPN) and transfers target proteins to it. Binds to nascent polypeptide chain and promotes folding in an environment in which there are many competing pathways for nonnative proteins. The chain is Probable prefoldin subunit 3 (pfdn3) from Dictyostelium discoideum (Social amoeba).